We begin with the raw amino-acid sequence, 1152 residues long: Nardilysin (1152 aa).

A signal peptide spans 1–20 (MLRKVTVAAVCATRRKLCEA). Disordered regions lie at residues 81–108 (LGAD…KSPS) and 133–208 (MEGK…KKTT). Serine 86, serine 94, and serine 96 each carry phosphoserine. Over residues 141–198 (TDDEEEEEVEEEEEDDDEDSGAEIEDDDEEGFDDEDEFDDEHDDDLDTEDNELEELEE) the composition is skewed to acidic residues. Histidine 234 serves as a coordination point for Zn(2+). Catalysis depends on glutamate 237, which acts as the Proton acceptor. Residues histidine 238 and glutamate 315 each coordinate Zn(2+).

It belongs to the peptidase M16 family. Interacts with BACE1 and NRG1. Zn(2+) is required as a cofactor.

It is found in the mitochondrion. Its subcellular location is the cell projection. The protein localises to the dendrite. The catalysed reaction is Hydrolysis of polypeptides, preferably at -Xaa-|-Arg-Lys-, and less commonly at -Arg-|-Arg-Xaa-, in which Xaa is not Arg or Lys.. Cleaves peptide substrates on the N-terminus of arginine residues in dibasic pairs. Is a critical activator of BACE1- and ADAM17-mediated pro-neuregulin ectodomain shedding, involved in the positive regulation of axonal maturation and myelination. Required for proper functioning of 2-oxoglutarate dehydrogenase (OGDH). This chain is Nardilysin, found in Pongo abelii (Sumatran orangutan).